A 514-amino-acid polypeptide reads, in one-letter code: Peptide chain release factor 3 (514 aa).

The tr-type G domain occupies 8-268 (KKRRTFAIIS…TFLEFAPEPH (261 aa)). GTP is bound by residues 17 to 24 (SHPDAGKT), 85 to 89 (DTPGH), and 139 to 142 (NKLD).

Belongs to the TRAFAC class translation factor GTPase superfamily. Classic translation factor GTPase family. PrfC subfamily.

The protein resides in the cytoplasm. Its function is as follows. Increases the formation of ribosomal termination complexes and stimulates activities of RF-1 and RF-2. It binds guanine nucleotides and has strong preference for UGA stop codons. It may interact directly with the ribosome. The stimulation of RF-1 and RF-2 is significantly reduced by GTP and GDP, but not by GMP. This Streptococcus pyogenes serotype M49 (strain NZ131) protein is Peptide chain release factor 3.